Here is a 377-residue protein sequence, read N- to C-terminus: Actin depolymerising venom protein gelsolin 1 (377 aa).

Residues 1–26 (MFRQMKLGSLATKLLLACFLVTCTSG) form the signal peptide. Gelsolin-like repeat units follow at residues 50-133 (FVPV…SEQF), 174-243 (IRVR…SSTS), and 298-368 (EKPL…PTAF).

As to expression, expressed by the venom gland (posterior main gland) (at protein level).

It localises to the secreted. This Platymeris rhadamanthus (Red spot assassin bug) protein is Actin depolymerising venom protein gelsolin 1.